Reading from the N-terminus, the 115-residue chain is MARVKRGNVARKRRNKILRLARGFRGGNGTLFRTANQRVMKALCNAYRDRRRRKRDFRRLWIARINAAARLNGVSYSRLMGGLKKADVRLNRKMLAQLAVVDPGSFTNVVAAAKS.

It belongs to the bacterial ribosomal protein bL20 family.

In terms of biological role, binds directly to 23S ribosomal RNA and is necessary for the in vitro assembly process of the 50S ribosomal subunit. It is not involved in the protein synthesizing functions of that subunit. The sequence is that of Large ribosomal subunit protein bL20 from Synechococcus sp. (strain CC9605).